Consider the following 146-residue polypeptide: Single-stranded DNA-binding protein, mitochondrial (146 aa).

The transit peptide at 1–16 directs the protein to the mitochondrion; the sequence is MLRNASAQILKQFVRH. Positions 29–140 constitute an SSB domain; that stretch reads INKVQILGRV…IIADNIVFLS (112 aa).

Its subcellular location is the mitochondrion. The protein localises to the mitochondrion matrix. It is found in the mitochondrion nucleoid. Its function is as follows. Binds preferentially and cooperatively to pyrimidine rich single-stranded DNA (ss-DNA). May be required to maintain the copy number of mitochondrial DNA (mtDNA) and play a crucial role during mtDNA replication. Required for retinal ganglion cell differentiation and retinal integrity. The protein is Single-stranded DNA-binding protein, mitochondrial of Danio rerio (Zebrafish).